A 170-amino-acid polypeptide reads, in one-letter code: Peptide deformylase-like (170 aa).

The active site involves glutamate 139.

The protein belongs to the polypeptide deformylase family.

This Bradyrhizobium diazoefficiens (strain JCM 10833 / BCRC 13528 / IAM 13628 / NBRC 14792 / USDA 110) protein is Peptide deformylase-like.